The sequence spans 226 residues: Protein-L-isoaspartate O-methyltransferase (226 aa).

Residue Ser75 is part of the active site.

This sequence belongs to the methyltransferase superfamily. L-isoaspartyl/D-aspartyl protein methyltransferase family.

It localises to the cytoplasm. The catalysed reaction is [protein]-L-isoaspartate + S-adenosyl-L-methionine = [protein]-L-isoaspartate alpha-methyl ester + S-adenosyl-L-homocysteine. Its function is as follows. Catalyzes the methyl esterification of L-isoaspartyl residues in peptides and proteins that result from spontaneous decomposition of normal L-aspartyl and L-asparaginyl residues. It plays a role in the repair and/or degradation of damaged proteins. The sequence is that of Protein-L-isoaspartate O-methyltransferase from Lawsonia intracellularis (strain PHE/MN1-00).